Here is a 59-residue protein sequence, read N- to C-terminus: Single-pass membrane and coiled-coil domain-containing protein 4 (59 aa).

The interval 1 to 23 (MRQLKGKPKKETSKDKKERKQAM) is disordered. Over residues 9-22 (KKETSKDKKERKQA) the composition is skewed to basic and acidic residues. Residues 9-31 (KKETSKDKKERKQAMQEARQQIT) are a coiled coil. A helical transmembrane segment spans residues 32 to 52 (TVVLPTLAVVVLLIVVFVYVA).

This sequence belongs to the SMCO4 family.

Its subcellular location is the membrane. This Mus musculus (Mouse) protein is Single-pass membrane and coiled-coil domain-containing protein 4 (Smco4).